The primary structure comprises 230 residues: Ureidoacrylate amidohydrolase RutB (230 aa).

Asp24 (proton acceptor) is an active-site residue. Residue Lys133 is part of the active site. The active-site Nucleophile is the Cys166.

The protein belongs to the isochorismatase family. RutB subfamily.

It catalyses the reaction (Z)-3-ureidoacrylate + H2O + H(+) = (Z)-3-aminoacrylate + NH4(+) + CO2. The catalysed reaction is (Z)-3-ureidoacrylate + H2O = (Z)-3-aminoacrylate + carbamate + H(+). The enzyme catalyses (Z)-2-methylureidoacrylate + H2O + H(+) = (Z)-2-methylaminoacrylate + NH4(+) + CO2. Functionally, hydrolyzes ureidoacrylate to form aminoacrylate and carbamate. The carbamate hydrolyzes spontaneously, thereby releasing one of the nitrogen atoms of the pyrimidine ring as ammonia and one of its carbon atoms as CO2. This is Ureidoacrylate amidohydrolase RutB from Escherichia coli O6:K15:H31 (strain 536 / UPEC).